The chain runs to 437 residues: Adenylosuccinate synthetase, organellar chromatophore (437 aa).

Residues 12–18 (GDEGKGK) and 40–42 (GHT) contribute to the GTP site. D13 functions as the Proton acceptor in the catalytic mechanism. Positions 13 and 40 each coordinate Mg(2+). IMP contacts are provided by residues 13 to 16 (DEGK), 38 to 41 (NAGH), T128, R142, Q223, T238, and R302. The Proton donor role is filled by H41. 298–304 (TTTGRRR) is a binding site for substrate. Residues R304 and 330 to 332 (KLD) each bind GTP.

This sequence belongs to the adenylosuccinate synthetase family. In terms of assembly, homodimer. Requires Mg(2+) as cofactor.

The protein localises to the plastid. It is found in the organellar chromatophore. The enzyme catalyses IMP + L-aspartate + GTP = N(6)-(1,2-dicarboxyethyl)-AMP + GDP + phosphate + 2 H(+). The protein operates within purine metabolism; AMP biosynthesis via de novo pathway; AMP from IMP: step 1/2. In terms of biological role, plays an important role in the de novo pathway and in the salvage pathway of purine nucleotide biosynthesis. Catalyzes the first committed step in the biosynthesis of AMP from IMP. This is Adenylosuccinate synthetase, organellar chromatophore from Paulinella chromatophora.